A 190-amino-acid polypeptide reads, in one-letter code: Ion-translocating oxidoreductase complex subunit B (190 aa).

A hydrophobic region spans residues M1 to A26. The region spanning E32–V90 is the 4Fe-4S domain. The [4Fe-4S] cluster site is built by C49, C52, C57, C73, C115, C118, C121, C125, C145, C148, C151, and C155. 2 4Fe-4S ferredoxin-type domains span residues Q106–R135 and A136–V165.

This sequence belongs to the 4Fe4S bacterial-type ferredoxin family. RnfB subfamily. In terms of assembly, the complex is composed of six subunits: RnfA, RnfB, RnfC, RnfD, RnfE and RnfG. It depends on [4Fe-4S] cluster as a cofactor.

Its subcellular location is the cell inner membrane. Part of a membrane-bound complex that couples electron transfer with translocation of ions across the membrane. The polypeptide is Ion-translocating oxidoreductase complex subunit B (Serratia proteamaculans (strain 568)).